A 220-amino-acid polypeptide reads, in one-letter code: GTP cyclohydrolase 1 (220 aa).

Residues Cys113, His116, and Cys184 each contribute to the Zn(2+) site.

This sequence belongs to the GTP cyclohydrolase I family. Homomer.

The catalysed reaction is GTP + H2O = 7,8-dihydroneopterin 3'-triphosphate + formate + H(+). Its pathway is cofactor biosynthesis; 7,8-dihydroneopterin triphosphate biosynthesis; 7,8-dihydroneopterin triphosphate from GTP: step 1/1. This is GTP cyclohydrolase 1 from Hamiltonella defensa subsp. Acyrthosiphon pisum (strain 5AT).